The primary structure comprises 190 residues: MIGSLTGIIEEIYNNYIILNVGNVGYIIYVSHKVLQSCKTGNNIKLYIETYVNRDNLTQLYGFLDKQEQDYMRMLVTINGINHKTAISILSKLSPEQIFSAVVSNNKNAFRGNGIGEKLAGRITTELQYKISKMPIEETLIIKEDDSLAALISLGYDKLKAFNAIQEIKANFPDDSIQEIIRKALQKLSQ.

The interval 1–64 (MIGSLTGIIE…DNLTQLYGFL (64 aa)) is domain I. Positions 65–142 (DKQEQDYMRM…KMPIEETLII (78 aa)) are domain II. Position 143 (lysine 143) is a region of interest, flexible linker. Positions 143–190 (KEDDSLAALISLGYDKLKAFNAIQEIKANFPDDSIQEIIRKALQKLSQ) are domain III.

The protein belongs to the RuvA family. Homotetramer. Forms an RuvA(8)-RuvB(12)-Holliday junction (HJ) complex. HJ DNA is sandwiched between 2 RuvA tetramers; dsDNA enters through RuvA and exits via RuvB. An RuvB hexamer assembles on each DNA strand where it exits the tetramer. Each RuvB hexamer is contacted by two RuvA subunits (via domain III) on 2 adjacent RuvB subunits; this complex drives branch migration. In the full resolvosome a probable DNA-RuvA(4)-RuvB(12)-RuvC(2) complex forms which resolves the HJ.

It localises to the cytoplasm. In terms of biological role, the RuvA-RuvB-RuvC complex processes Holliday junction (HJ) DNA during genetic recombination and DNA repair, while the RuvA-RuvB complex plays an important role in the rescue of blocked DNA replication forks via replication fork reversal (RFR). RuvA specifically binds to HJ cruciform DNA, conferring on it an open structure. The RuvB hexamer acts as an ATP-dependent pump, pulling dsDNA into and through the RuvAB complex. HJ branch migration allows RuvC to scan DNA until it finds its consensus sequence, where it cleaves and resolves the cruciform DNA. This Ehrlichia chaffeensis (strain ATCC CRL-10679 / Arkansas) protein is Holliday junction branch migration complex subunit RuvA.